A 364-amino-acid chain; its full sequence is Polygalacturonase (364 aa).

The first 21 residues, 1–21 (MVAYALTSMLLSAGALVAAAP), serve as a signal peptide directing secretion. Positions 22–27 (SGLDAR) are excised as a propeptide. Cysteines 30 and 45 form a disulfide. PbH1 repeat units follow at residues 158 to 188 (VTGL…DIGS), 189 to 210 (SSGI…AINS), 211 to 231 (GSDI…SIGS), 240 to 261 (VKGV…RIKT), 269 to 291 (VSDI…VIEQ), and 303 to 348 (TTGV…SITG). The Proton donor role is filled by aspartate 203. An intrachain disulfide couples cysteine 205 to cysteine 221. The active site involves histidine 225. Residue asparagine 276 is glycosylated (N-linked (GlcNAc...) asparagine). Cysteine 331 and cysteine 336 are disulfide-bonded. The N-linked (GlcNAc...) asparagine glycan is linked to asparagine 340. Cysteines 355 and 364 form a disulfide.

Belongs to the glycosyl hydrolase 28 family.

The protein localises to the secreted. The catalysed reaction is (1,4-alpha-D-galacturonosyl)n+m + H2O = (1,4-alpha-D-galacturonosyl)n + (1,4-alpha-D-galacturonosyl)m.. Functionally, involved in maceration and soft-rotting of plant tissue. Hydrolyzes the 1,4-alpha glycosidic bonds of de-esterified pectate in the smooth region of the plant cell wall. This chain is Polygalacturonase (PGN1), found in Cochliobolus carbonum (Maize leaf spot fungus).